A 534-amino-acid chain; its full sequence is High affinity cGMP-specific 3',5'-cyclic phosphodiesterase 9A (534 aa).

The PDEase domain maps to 175–496 (PRRDVPTYPK…EHYEELKQLD (322 aa)). The active-site Proton donor is the His251. Residue 251–255 (HNFRH) coordinates 3',5'-cyclic GMP. Zn(2+)-binding residues include His255, His291, and Asp292. Asp292 is a 3',5'-cyclic GMP binding site. Residue Asp292 participates in Mg(2+) binding. Ser318 carries the post-translational modification Phosphoserine. Residues Asp401, Tyr423, and 451-452 (AQ) contribute to the 3',5'-cyclic GMP site. Asp401 is a binding site for Zn(2+). The segment at 500 to 534 (KELQKKTESLTSGAPENTTEKNRDAKDSEGHSPPN) is disordered. Positions 517 to 534 (TTEKNRDAKDSEGHSPPN) are enriched in basic and acidic residues.

Belongs to the cyclic nucleotide phosphodiesterase family. PDE9 subfamily. In terms of assembly, homodimer. Zn(2+) is required as a cofactor. It depends on Mg(2+) as a cofactor. In terms of tissue distribution, highly expressed in kidney. Lower levels in liver, lung and brain. Widely expressed in brain, with highest expression in cerebellar Purkinje cells. Present in heart (at protein level).

It is found in the cell projection. It localises to the ruffle membrane. Its subcellular location is the cytoplasm. The protein localises to the perinuclear region. The protein resides in the golgi apparatus. It is found in the endoplasmic reticulum. It localises to the cell membrane. Its subcellular location is the sarcolemma. It carries out the reaction 3',5'-cyclic GMP + H2O = GMP + H(+). The protein operates within purine metabolism; 3',5'-cyclic GMP degradation; GMP from 3',5'-cyclic GMP: step 1/1. Inhibited by SCH 51866 and moderately, by zaprinast. Specifically inhibited by PF-04447943 (6-[(3S,4S)-4-methyl-1-(pyrimidin-2-ylmethyl)pyrrolidin-3-yl]-1-(tetrahydro-2H-pyran-4-yl)-1,5-dihydro-4H-pyrazolo[3,4-d]pyrimidin-4-one). Functionally, specifically hydrolyzes the second messenger cGMP, which is a key regulator of many important physiological processes. Highly specific: compared to other members of the cyclic nucleotide phosphodiesterase family, has the highest affinity and selectivity for cGMP. Specifically regulates natriuretic-peptide-dependent cGMP signaling in heart, acting as a regulator of cardiac hypertrophy in myocytes and muscle. Does not regulate nitric oxide-dependent cGMP in heart. Additional experiments are required to confirm whether its ability to hydrolyze natriuretic-peptide-dependent cGMP is specific to heart or is a general feature of the protein. In brain, involved in cognitive function, such as learning and long-term memory. In Mus musculus (Mouse), this protein is High affinity cGMP-specific 3',5'-cyclic phosphodiesterase 9A (Pde9a).